The sequence spans 223 residues: MENKKKKAVVVFSGGQDSTTCLFWALKTFDEVATVTFDYGQRHAEEIECAKEIAEQLGVSFRVLDMTLLNQLTESALTREEIAVKDGENGELPSTFVPGRNQLFLSFAAVYAKQIGARHLVTGVCETDYSGYPDCRDVFIKSLNVTLNLAMDDQFVIHTPLMWLDKAETWKLADELGALDFVREKTLTCYHGIRGDGCGECPACMLRRRGLELYLAEKEGDRA.

12–22 (FSGGQDSTTCL) serves as a coordination point for ATP. Zn(2+)-binding residues include cysteine 189, cysteine 198, cysteine 201, and cysteine 204.

This sequence belongs to the QueC family. In terms of assembly, homodimer. It depends on Zn(2+) as a cofactor.

It catalyses the reaction 7-carboxy-7-deazaguanine + NH4(+) + ATP = 7-cyano-7-deazaguanine + ADP + phosphate + H2O + H(+). The protein operates within purine metabolism; 7-cyano-7-deazaguanine biosynthesis. Catalyzes the ATP-dependent conversion of 7-carboxy-7-deazaguanine (CDG) to 7-cyano-7-deazaguanine (preQ(0)). This chain is 7-cyano-7-deazaguanine synthase, found in Halalkalibacterium halodurans (strain ATCC BAA-125 / DSM 18197 / FERM 7344 / JCM 9153 / C-125) (Bacillus halodurans).